A 441-amino-acid chain; its full sequence is Homoserine dehydrogenase (441 aa).

NADP(+) contacts are provided by Asn17 and Val18. NAD(+) is bound by residues Val18 and Gly47. Val18 serves as a coordination point for NADPH. NADP(+) contacts are provided by Arg49, Arg50, and Lys107. Arg49 contacts NADPH. Lys107 contacts NADPH. The Na(+) site is built by Glu131, Val134, Gly136, and Ile138. Residues Gly189 and Glu192 each coordinate NADP(+). The L-homoserine site is built by Glu192 and Asp203. Lys207 (proton donor) is an active-site residue. Position 309 (Gly309) interacts with NADP(+). An NAD(+)-binding site is contributed by Gly309. Residue Gly309 participates in NADPH binding. The 80-residue stretch at 356-435 (YVSMNVADKP…VVQGVTSVLR (80 aa)) folds into the ACT domain.

Belongs to the homoserine dehydrogenase family. The cofactor is a metal cation.

It carries out the reaction L-homoserine + NADP(+) = L-aspartate 4-semialdehyde + NADPH + H(+). The enzyme catalyses L-homoserine + NAD(+) = L-aspartate 4-semialdehyde + NADH + H(+). The protein operates within amino-acid biosynthesis; L-methionine biosynthesis via de novo pathway; L-homoserine from L-aspartate: step 3/3. Its pathway is amino-acid biosynthesis; L-threonine biosynthesis; L-threonine from L-aspartate: step 3/5. Functionally, catalyzes the conversion of L-aspartate-beta-semialdehyde (L-Asa) to L-homoserine (L-Hse), the third step in the biosynthesis of threonine and methionine from aspartate. This chain is Homoserine dehydrogenase (hom), found in Mycobacterium leprae (strain TN).